The primary structure comprises 235 residues: Pro-opiomelanocortin (235 aa).

A signal peptide spans 1–26; that stretch reads MPRFCYSRSGALLLALLLQTSIDVWS. A Phenylalanine amide modification is found at Phe87. The interval 88–126 is disordered; that stretch reads GPRNSSSAGSAAQRRAEEEAVWGDGSPEPSPREGKRSYS. The span at 90 to 100 shows a compositional bias: low complexity; that stretch reads RNSSSAGSAAQ. N-linked (GlcNAc...) asparagine glycosylation occurs at Asn91. Residues 103–121 constitute a propeptide that is removed on maturation; it reads AEEEAVWGDGSPEPSPREG. Positions 117-126 are enriched in basic and acidic residues; the sequence is SPREGKRSYS. Residue Ser124 is modified to N-acetylserine; in Corticotropin. At Val136 the chain carries Valine amide. N-linked (GlcNAc...) asparagine glycosylation is present at Asn152. Ser154 carries the post-translational modification Phosphoserine. Positions 179 to 210 are disordered; it reads ESDAEKDDGPYRVEHFRWSNPPKDKRYGGFMT. Residues 185 to 205 show a composition bias toward basic and acidic residues; sequence DDGPYRVEHFRWSNPPKDKRY.

The protein belongs to the POMC family. Specific enzymatic cleavages at paired basic residues yield the different active peptides. As to expression, ACTH and MSH are produced by the pituitary gland.

Its subcellular location is the secreted. In terms of biological role, stimulates the adrenal glands to release cortisol. Its function is as follows. Anorexigenic peptide. Increases the pigmentation of skin by increasing melanin production in melanocytes. Functionally, increases the pigmentation of skin by increasing melanin production in melanocytes. Endogenous orexigenic opiate. In terms of biological role, endogenous opiate. The protein is Pro-opiomelanocortin (Pomc) of Mus musculus (Mouse).